The sequence spans 358 residues: Leukotriene B4 receptor 2 (358 aa).

Residues 1–24 (MSVCYRPPGNETLLSWKGSRATGT) lie on the Extracellular side of the membrane. N-linked (GlcNAc...) asparagine glycosylation is present at asparagine 10. The chain crosses the membrane as a helical span at residues 25–45 (AFLLLAALLGLPGNGFVVWSL). Over 46–60 (AGWRPTAGRPLAATL) the chain is Cytoplasmic. The helical transmembrane segment at 61-81 (VLHLALADGAVLLLTPLFVAF) threads the bilayer. At 82–96 (LSRQAWPLGQVGCKA) the chain is on the extracellular side. A helical transmembrane segment spans residues 97-117 (VYYVCALSMYASVLLTGLLSL). Residues 118 to 140 (QRCLAVTRPFLAPRLRSPALARR) lie on the Cytoplasmic side of the membrane. The chain crosses the membrane as a helical span at residues 141-161 (LLLGVWLAALVLAVPAAVYRH). The Extracellular segment spans residues 162–185 (LWGDRVCQLCHPSAVHAAAHLSLE). The chain crosses the membrane as a helical span at residues 186 to 206 (TLTAFVLPFGTVLGCYGVTLA). At 207-225 (RLRGARWGSGRQGTRVGRL) the chain is on the cytoplasmic side. Residues 226-246 (VSAIVLAFGLLWAPYHAVNLL) traverse the membrane as a helical segment. Residues 247–275 (QAVAALAPPEGPLARLGGAGQAARAGTTA) lie on the Extracellular side of the membrane. Residues 276-296 (LAFFSSSVNPVLYVFTAGDLL) traverse the membrane as a helical segment. Residues 297-358 (PRAGPRFLTR…GRMEKDSQEW (62 aa)) lie on the Cytoplasmic side of the membrane. Residues 315 to 358 (RVGSRSREGTMELRTTPRLKVVGQGRGYGDPGGGGRMEKDSQEW) are disordered. Positions 338 to 349 (QGRGYGDPGGGG) are enriched in gly residues.

The protein belongs to the G-protein coupled receptor 1 family.

It localises to the cell membrane. Its function is as follows. Low-affinity receptor for leukotrienes including leukotriene B4. Mediates chemotaxis of granulocytes and macrophages. The response is mediated via G-proteins that activate a phosphatidylinositol-calcium second messenger system. The chain is Leukotriene B4 receptor 2 (Ltb4r2) from Rattus norvegicus (Rat).